A 222-amino-acid chain; its full sequence is Sugar fermentation stimulation protein homolog (222 aa).

The protein belongs to the SfsA family.

This Thermotoga neapolitana (strain ATCC 49049 / DSM 4359 / NBRC 107923 / NS-E) protein is Sugar fermentation stimulation protein homolog.